The primary structure comprises 190 residues: Corticoliberin (190 aa).

Residues 1-24 form the signal peptide; the sequence is MRLRLLVSVGVLLVALLPSPPCRA. The propeptide occupies 25 to 147; it reads LLSRGPIPGA…QEAPAARKRR (123 aa). Disordered stretches follow at residues 33–57 and 116–151; these read GARQASQHPQPLSFFQPPPQPQEPQ and RRPFDSPAGPAERGTENALGSRQEAPAARKRRSQEP. Position 188 is an alanine amide (alanine 188).

Belongs to the sauvagine/corticotropin-releasing factor/urotensin I family. As to quaternary structure, interacts (via C-terminus) with CRFR1 (via N-terminal extracellular domain). In terms of tissue distribution, produced by the hypothalamus.

It is found in the secreted. In terms of biological role, hormone regulating the release of corticotropin from pituitary gland. Induces NLRP6 in intestinal epithelial cells, hence may influence gut microbiota profile. The protein is Corticoliberin (CRH) of Bos taurus (Bovine).